A 1512-amino-acid polypeptide reads, in one-letter code: Probable RNA-directed RNA polymerase (1512 aa).

Belongs to the totiviridae RNA-directed RNA polymerase family.

The enzyme catalyses RNA(n) + a ribonucleoside 5'-triphosphate = RNA(n+1) + diphosphate. RNA-dependent RNA polymerase which replicates the viral genome. Catalyzes the transcription of fully conservative plus-strand genomic RNAs that are extruded from the virion into the cytoplasm where they function as mRNAs for translation of viral proteins and also as substrates for encapsidation to form new virions. Once encapsidated, the positive strand is converted to dsRNA by the RNA-directed RNA polymerase. The chain is Probable RNA-directed RNA polymerase (gag-pol) from Saccharomyces cerevisiae virus L-BC (ScV-L-BC).